The following is a 672-amino-acid chain: Spermatid perinuclear RNA-binding protein (672 aa).

The region spanning 5-363 (RSFANDDRHV…ALKRPFEDGL (359 aa)) is the DZF domain. Disordered stretches follow at residues 52–73 (TNKGTKTEGETEVKKDEAGENY) and 349–371 (GAGSSALKRPFEDGLGDDKDPNK). Positions 357 to 371 (RPFEDGLGDDKDPNK) are enriched in basic and acidic residues. The DRBM 1 domain maps to 387–453 (DLMNALMRLN…AVKVLQAMGY (67 aa)). Residues 466–476 (SDEKSDNESKN) are compositionally biased toward basic and acidic residues. The tract at residues 466 to 499 (SDEKSDNESKNETVSSNSSNNTGNSTTETSSTLE) is disordered. Over residues 477–497 (ETVSSNSSNNTGNSTTETSST) the composition is skewed to low complexity. The 67-residue stretch at 510-576 (SGKNPVMELN…ALAALEKLFS (67 aa)) folds into the DRBM 2 domain. An asymmetric dimethylarginine mark is found at R612 and R617.

Interacts with EIF2AK2. Associates with microtubules; it is unsure whether such interaction is direct or indirect.

Its subcellular location is the cytoplasm. Functionally, involved in spermatogenesis and sperm function. Plays a role in regulation of cell growth. Binds to double-stranded DNA and RNA. Binds most efficiently to poly(I:C) RNA than to poly(dI:dC) DNA. Binds also to single-stranded poly(G) RNA. Binds non-specifically to the mRNA PRM1 3'-UTR and adenovirus VA RNA. In Homo sapiens (Human), this protein is Spermatid perinuclear RNA-binding protein (STRBP).